The following is a 473-amino-acid chain: Probable DNA N(6)-methyladenine demethylase ALKBH1B (473 aa).

357–359 (NFY) provides a ligand contact to 2-oxoglutarate. 3 residues coordinate Fe cation: His-368, Asp-391, and His-449. 461-465 (RLFFR) is a binding site for 2-oxoglutarate.

The protein belongs to the alkB family. Fe(2+) serves as cofactor. As to expression, undetectable.

It carries out the reaction an N(6)-methyl-2'-deoxyadenosine in DNA + 2-oxoglutarate + O2 = a 2'-deoxyadenosine in DNA + formaldehyde + succinate + CO2. In terms of biological role, dioxygenase that may catalyzes DNA N(6)-methyladenine (6 mA) demethylation. Requires molecular oxygen, alpha-ketoglutarate and iron. This is Probable DNA N(6)-methyladenine demethylase ALKBH1B from Arabidopsis thaliana (Mouse-ear cress).